Here is a 327-residue protein sequence, read N- to C-terminus: Annexin A8 (327 aa).

4 Annexin repeats span residues 21–92, 93–164, 177–249, and 253–324; these read FNPD…ALMY, PPYR…CLLQ, GLAL…TVVK, and NLHS…SLVG. Residues M266, G268, G270, and D310 each coordinate Ca(2+).

The protein belongs to the annexin family.

Its function is as follows. This protein is an anticoagulant protein that acts as an indirect inhibitor of the thromboplastin-specific complex, which is involved in the blood coagulation cascade. This chain is Annexin A8 (ANXA8), found in Pan troglodytes (Chimpanzee).